Here is a 179-residue protein sequence, read N- to C-terminus: Inosine/xanthosine triphosphatase (179 aa).

Threonine 8–lysine 13 provides a ligand contact to substrate. Mg(2+) is bound by residues aspartate 38 and glutamate 68. Residue glutamate 68–alanine 69 coordinates substrate.

It belongs to the YjjX NTPase family. As to quaternary structure, homodimer. The cofactor is Mg(2+). Mn(2+) is required as a cofactor.

The enzyme catalyses XTP + H2O = XDP + phosphate + H(+). The catalysed reaction is ITP + H2O = IDP + phosphate + H(+). Functionally, phosphatase that hydrolyzes non-canonical purine nucleotides such as XTP and ITP to their respective diphosphate derivatives. Probably excludes non-canonical purines from DNA/RNA precursor pool, thus preventing their incorporation into DNA/RNA and avoiding chromosomal lesions. This is Inosine/xanthosine triphosphatase from Proteus mirabilis (strain HI4320).